The following is a 159-amino-acid chain: Nanos homolog 3 (159 aa).

A disordered region spans residues 42–87 (QEMQSDADSDEQAAALLESPSGPIRSRDSPEQNTSPGGGKPKSSPA). A Nanos-type zinc finger spans residues 91–145 (FCSFCKHNGETEAVYTSHYLKNRDGDVMCPYLRQYKCPLCGATGAKAHTKRFCPM). Residues Cys92, Cys95, His108, Cys119, Cys127, Cys130, His138, and Cys143 each coordinate Zn(2+). 2 short sequence motifs (C2HC) span residues 92 to 119 (CSFCKHNGETEAVYTSHYLKNRDGDVMC) and 127 to 143 (CPLCGATGAKAHTKRFC). The segment at 92–159 (CSFCKHNGET…YCSVYAKSTW (68 aa)) is interaction with mylpfa.

Belongs to the nanos family. Interacts (via C-terminus) with myosin mylpfa/mylz2; the interaction negatively regulates mylpfa phosphorylation. In the embryo, displays early ubiquitous expression before being restricted to primordial germ cells in a 3'-UTR-dependent manner. Expressed in early stage germ cells in larval and adult ovaries.

It localises to the cytoplasm. The protein localises to the perinuclear region. RNA-binding protein which binds to RNA with no sequence specificity. Probably represses translation of specific mRNAs. Essential for the development of primordial germ cells (PGCs) by ensuring their proper migration and survival but is not required for PGC specification. Also required to maintain oocyte production in the adult ovary. Negatively regulates phosphorylation of myosin mylpfa/mylz2. The chain is Nanos homolog 3 from Danio rerio (Zebrafish).